Here is a 178-residue protein sequence, read N- to C-terminus: Alkyl hydroperoxide reductase AhpD (178 aa).

Catalysis depends on Cys-131, which acts as the Proton donor. Residues Cys-131 and Cys-134 are joined by a disulfide bond. Residue Cys-134 is the Cysteine sulfenic acid (-SOH) intermediate of the active site.

Belongs to the AhpD family. In terms of assembly, homotrimer.

The enzyme catalyses N(6)-[(R)-dihydrolipoyl]-L-lysyl-[lipoyl-carrier protein] + a hydroperoxide = N(6)-[(R)-lipoyl]-L-lysyl-[lipoyl-carrier protein] + an alcohol + H2O. In terms of biological role, antioxidant protein with alkyl hydroperoxidase activity. Required for the reduction of the AhpC active site cysteine residues and for the regeneration of the AhpC enzyme activity. This Streptomyces coelicolor (strain ATCC BAA-471 / A3(2) / M145) protein is Alkyl hydroperoxide reductase AhpD.